The primary structure comprises 286 residues: Aquaporin PIP1-1 (286 aa).

Methionine 1 carries the post-translational modification N-acetylmethionine. The tract at residues 1-34 is disordered; that stretch reads MEGKEEDVRVGANKFPERQPIGTSAQSDKDYKEP. At 1-54 the chain is on the cytoplasmic side; the sequence is MEGKEEDVRVGANKFPERQPIGTSAQSDKDYKEPPPAPFFEPGELSSWSFWRAG. A helical membrane pass occupies residues 55 to 75; it reads IAEFIATFLFLYITVLTVMGV. Residues 76-91 are Extracellular-facing; sequence KRSPNMCASVGIQGIA. A helical transmembrane segment spans residues 92–112; it reads WAFGGMIFALVYCTAGISGGH. Residues 113-132 are Cytoplasmic-facing; the sequence is INPAVTFGLFLARKLSLTRA. Residues 114–116 carry the NPA 1 motif; sequence NPA. The chain crosses the membrane as a helical span at residues 133–153; sequence LYYIVMQCLGAICGAGVVKGF. Topologically, residues 154–174 are extracellular; that stretch reads QPKQYQALGGGANTVAHGYTK. Residues 175-195 traverse the membrane as a helical segment; the sequence is GSGLGAEIIGTFVLVYTVFSA. Over 196–208 the chain is Cytoplasmic; sequence TDAKRNARDSHVP. The helical transmembrane segment at 209–229 threads the bilayer; it reads ILAPLPIGFAVFLVHLATIPI. The Extracellular segment spans residues 230–256; sequence TGTGINPARSLGAAIIYNKDHSWDDHW. Positions 235-237 match the NPA 2 motif; that stretch reads NPA. The helical transmembrane segment at 257 to 277 threads the bilayer; the sequence is VFWVGPFIGAALAALYHVVVI. The Cytoplasmic portion of the chain corresponds to 278-286; sequence RAIPFKSRS. Phosphoserine is present on serine 284.

Belongs to the MIP/aquaporin (TC 1.A.8) family. PIP (TC 1.A.8.11) subfamily. As to expression, widely expressed. Expressed in roots, above ground and in flower buds.

Its subcellular location is the cell membrane. In terms of biological role, water channel required to facilitate the transport of water across cell membrane. Its function is impaired by Hg(2+). The chain is Aquaporin PIP1-1 (PIP1-1) from Arabidopsis thaliana (Mouse-ear cress).